We begin with the raw amino-acid sequence, 535 residues long: CTP synthase (535 aa).

Positions 1-270 (MSKNTKYVFV…DRLVCEKLGL (270 aa)) are amidoligase domain. Ser-16 contacts CTP. Position 16 (Ser-16) interacts with UTP. ATP is bound at residue 17-22 (SLGKGI). L-glutamine is bound at residue Tyr-57. Asp-74 provides a ligand contact to ATP. 2 residues coordinate Mg(2+): Asp-74 and Glu-144. Residues 151–153 (DIE), 191–196 (KTKPTQ), and Lys-227 each bind CTP. Residues 191-196 (KTKPTQ) and Lys-227 each bind UTP. The 241-residue stretch at 295-535 (KIALVGKYVE…GFVGAALNNK (241 aa)) folds into the Glutamine amidotransferase type-1 domain. Gly-357 contributes to the L-glutamine binding site. The Nucleophile; for glutamine hydrolysis role is filled by Cys-384. L-glutamine contacts are provided by residues 385-388 (LGMQ), Glu-408, and Arg-465. Active-site residues include His-510 and Glu-512.

The protein belongs to the CTP synthase family. In terms of assembly, homotetramer.

The enzyme catalyses UTP + L-glutamine + ATP + H2O = CTP + L-glutamate + ADP + phosphate + 2 H(+). The catalysed reaction is L-glutamine + H2O = L-glutamate + NH4(+). It catalyses the reaction UTP + NH4(+) + ATP = CTP + ADP + phosphate + 2 H(+). It functions in the pathway pyrimidine metabolism; CTP biosynthesis via de novo pathway; CTP from UDP: step 2/2. Allosterically activated by GTP, when glutamine is the substrate; GTP has no effect on the reaction when ammonia is the substrate. The allosteric effector GTP functions by stabilizing the protein conformation that binds the tetrahedral intermediate(s) formed during glutamine hydrolysis. Inhibited by the product CTP, via allosteric rather than competitive inhibition. Its function is as follows. Catalyzes the ATP-dependent amination of UTP to CTP with either L-glutamine or ammonia as the source of nitrogen. Regulates intracellular CTP levels through interactions with the four ribonucleotide triphosphates. The chain is CTP synthase from Clostridium perfringens (strain ATCC 13124 / DSM 756 / JCM 1290 / NCIMB 6125 / NCTC 8237 / Type A).